Reading from the N-terminus, the 297-residue chain is ER membrane protein complex subunit 2-B (297 aa).

TPR repeat units lie at residues 87–120, 155–188, and 192–225; these read HRVK…DPTN, QEAW…NPHN, and YQQF…NNHS.

Belongs to the EMC2 family. In terms of assembly, component of the ER membrane protein complex (EMC).

It localises to the endoplasmic reticulum membrane. Its function is as follows. Part of the endoplasmic reticulum membrane protein complex (EMC) that enables the energy-independent insertion into endoplasmic reticulum membranes of newly synthesized membrane proteins. Preferentially accommodates proteins with transmembrane domains that are weakly hydrophobic or contain destabilizing features such as charged and aromatic residues. Involved in the cotranslational insertion of multi-pass membrane proteins in which stop-transfer membrane-anchor sequences become ER membrane spanning helices. It is also required for the post-translational insertion of tail-anchored/TA proteins in endoplasmic reticulum membranes. By mediating the proper cotranslational insertion of N-terminal transmembrane domains in an N-exo topology, with translocated N-terminus in the lumen of the ER, controls the topology of multi-pass membrane proteins. By regulating the insertion of various proteins in membranes, it is indirectly involved in many cellular processes. This chain is ER membrane protein complex subunit 2-B (emc2-b), found in Xenopus laevis (African clawed frog).